We begin with the raw amino-acid sequence, 244 residues long: tRNA pseudouridine synthase A (244 aa).

Aspartate 52 acts as the Nucleophile in catalysis. Tyrosine 110 is a substrate binding site.

It belongs to the tRNA pseudouridine synthase TruA family. As to quaternary structure, homodimer.

The enzyme catalyses uridine(38/39/40) in tRNA = pseudouridine(38/39/40) in tRNA. In terms of biological role, formation of pseudouridine at positions 38, 39 and 40 in the anticodon stem and loop of transfer RNAs. The protein is tRNA pseudouridine synthase A of Thermoanaerobacter pseudethanolicus (strain ATCC 33223 / 39E) (Clostridium thermohydrosulfuricum).